The primary structure comprises 37 residues: Large ribosomal subunit protein bL36 (37 aa).

Belongs to the bacterial ribosomal protein bL36 family.

The polypeptide is Large ribosomal subunit protein bL36 (Colwellia psychrerythraea (strain 34H / ATCC BAA-681) (Vibrio psychroerythus)).